The chain runs to 608 residues: MRHLKLTGFIFFLLSLTESLALPTKPQDVDHFNATQKFINENVAYLTIIASAQYVQEASFEEVEMLVKVMLDYKDRCLADSTLPECSKIANDAIQDMLCDMKGLPQKHNFSHCCRQAGFQRRLCFFYNKKANVGFLPPFPTLDPEEKCQAYKNNSESFLNLYMYEVARRNPFAFAPVLLNVAARFEEAATTCCEQQQKATYFQDKAAPITQYLKALSSYQRNVCGALLKFGPKTLNSINIAVFSKKFPKIGFEDLTSLLEDVSSMYDGCCEGDVVQCIRSQSQVMHHICSKQDSISSKIKACCEKKLPERADCIINANKDDRPEDLSLRTPKFTDSENVCQERDSEQDKFFAEFLYDYSRRHTELSTPELLRITKVYKDLLEDCCNRKNPLSCYRHAEDKFNETTERSLAMVQQECKQFQELGKDALQRHFLVKFTKAAPQLPMEELVSLSKEMVAALATCCTLSDEFACVDNLADLVLGELCGMNKNRTINPTVDHCCRADFAFRRPCFEHLKADTTYALPSVSALVSALRADWCQPLKEDLQNKRHRFLVNLVKWMPEITDEERLCLFTKFTAAGEECGNIQKPEACFSPESSKTGDVSQDAEKQR.

Residues 1-21 (MRHLKLTGFIFFLLSLTESLA) form the signal peptide. 3 consecutive Albumin domains span residues 22 to 210 (LPTK…APIT), 211 to 403 (QYLK…KFNE), and 404 to 599 (TTER…KTGD). Asn33 is a glycosylation site (N-linked (GlcNAc...) asparagine). 10 disulfide bridges follow: Cys77–Cys86, Cys99–Cys114, Cys113–Cys124, Cys148–Cys193, Cys224–Cys270, Cys269–Cys277, Cys289–Cys303, Cys302–Cys313, Cys340–Cys385, and Cys384–Cys393. N-linked (GlcNAc...) asparagine glycosylation occurs at Asn109. Asn153 is a glycosylation site (N-linked (GlcNAc...) asparagine). The binding pocket for hydrophobic ligands stretch occupies residues 215-319 (ALSSYQRNVC…RADCIINANK (105 aa)). Residue Asn402 is glycosylated (N-linked (GlcNAc...) asparagine). 5 disulfide bridges follow: Cys416–Cys462, Cys461–Cys470, Cys483–Cys499, Cys498–Cys509, and Cys580–Cys589. The N-linked (GlcNAc...) asparagine glycan is linked to Asn488. The segment at 585 to 608 (KPEACFSPESSKTGDVSQDAEKQR) is disordered.

The protein belongs to the ALB/AFP/VDB family. As to quaternary structure, forms a 1:1 complex with Wnt family members; interacts with WNT1, WNT2B, WNT3, WNT3A, WNT5A, WNT7A, WNT7B, WNT8, WNT9A, WNT9B, WNT10A and WNT10B. N-glycosylated; more than 90% of the glycans are sialylated.

The protein localises to the secreted. Functionally, functions as a carrier for hydrophobic molecules in body fluids. Essential for the solubility and activity of lipidated Wnt family members, including WNT1, WNT2B, WNT3, WNT3A, WNT5A, WNT7A, WNT7B, WNT8, WNT9A, WNT9B, WNT10A and WNT10B. Binds vitamin E. May transport vitamin E in body fluids under conditions where the lipoprotein system is not sufficient. May be involved in the transport of vitamin E across the blood-brain barrier. The protein is Afamin (Afm) of Rattus norvegicus (Rat).